Reading from the N-terminus, the 240-residue chain is Ubiquinone biosynthesis O-methyltransferase (240 aa).

The S-adenosyl-L-methionine site is built by arginine 44, glycine 64, aspartate 85, and methionine 129.

The protein belongs to the methyltransferase superfamily. UbiG/COQ3 family.

The catalysed reaction is a 3-demethylubiquinol + S-adenosyl-L-methionine = a ubiquinol + S-adenosyl-L-homocysteine + H(+). The enzyme catalyses a 3-(all-trans-polyprenyl)benzene-1,2-diol + S-adenosyl-L-methionine = a 2-methoxy-6-(all-trans-polyprenyl)phenol + S-adenosyl-L-homocysteine + H(+). The protein operates within cofactor biosynthesis; ubiquinone biosynthesis. In terms of biological role, O-methyltransferase that catalyzes the 2 O-methylation steps in the ubiquinone biosynthetic pathway. The protein is Ubiquinone biosynthesis O-methyltransferase of Escherichia coli O6:H1 (strain CFT073 / ATCC 700928 / UPEC).